A 425-amino-acid chain; its full sequence is Histidine--tRNA ligase (425 aa).

It belongs to the class-II aminoacyl-tRNA synthetase family. In terms of assembly, homodimer.

The protein localises to the cytoplasm. The enzyme catalyses tRNA(His) + L-histidine + ATP = L-histidyl-tRNA(His) + AMP + diphosphate + H(+). This chain is Histidine--tRNA ligase, found in Desulforapulum autotrophicum (strain ATCC 43914 / DSM 3382 / VKM B-1955 / HRM2) (Desulfobacterium autotrophicum).